Reading from the N-terminus, the 208-residue chain is Large ribosomal subunit protein uL4 (208 aa).

A disordered region spans residues 58 to 77 (RGGGRKPWRQKGTGRARQGS). A compositionally biased stretch (basic residues) spans 60-71 (GGRKPWRQKGTG).

It belongs to the universal ribosomal protein uL4 family. Part of the 50S ribosomal subunit.

In terms of biological role, one of the primary rRNA binding proteins, this protein initially binds near the 5'-end of the 23S rRNA. It is important during the early stages of 50S assembly. It makes multiple contacts with different domains of the 23S rRNA in the assembled 50S subunit and ribosome. Functionally, forms part of the polypeptide exit tunnel. The protein is Large ribosomal subunit protein uL4 of Caldicellulosiruptor bescii (strain ATCC BAA-1888 / DSM 6725 / KCTC 15123 / Z-1320) (Anaerocellum thermophilum).